The chain runs to 185 residues: Large ribosomal subunit protein uL6 (185 aa).

Belongs to the universal ribosomal protein uL6 family. In terms of assembly, part of the 50S ribosomal subunit.

Functionally, this protein binds to the 23S rRNA, and is important in its secondary structure. It is located near the subunit interface in the base of the L7/L12 stalk, and near the tRNA binding site of the peptidyltransferase center. In Staphylothermus marinus (strain ATCC 43588 / DSM 3639 / JCM 9404 / F1), this protein is Large ribosomal subunit protein uL6.